We begin with the raw amino-acid sequence, 319 residues long: Protein MGF 360-8L (319 aa).

Belongs to the asfivirus MGF 360 family.

Plays a role in virus cell tropism, and may be required for efficient virus replication in macrophages. The sequence is that of Protein MGF 360-8L from Ornithodoros (relapsing fever ticks).